A 142-amino-acid chain; its full sequence is Small ribosomal subunit protein uS11 (142 aa).

Positions 1-21 (MPPKTRGAVRKPRRKDKKNIA) are disordered. Basic residues predominate over residues 7 to 17 (GAVRKPRRKDK).

This sequence belongs to the universal ribosomal protein uS11 family. In terms of assembly, part of the 30S ribosomal subunit. Interacts with proteins S7 and S18. Binds to IF-3.

Its function is as follows. Located on the platform of the 30S subunit, it bridges several disparate RNA helices of the 16S rRNA. Forms part of the Shine-Dalgarno cleft in the 70S ribosome. This Paenarthrobacter aurescens (strain TC1) protein is Small ribosomal subunit protein uS11.